The primary structure comprises 214 residues: Pyridoxine/pyridoxamine 5'-phosphate oxidase (214 aa).

Residues 8 to 11 (RKSY) and Lys-67 each bind substrate. FMN contacts are provided by residues 62-67 (RVVLLK), 77-78 (YT), Lys-84, and Gln-106. Residues Tyr-124, Arg-128, and Ser-132 each coordinate substrate. Residues 141 to 142 (QS) and Trp-186 each bind FMN. 192-194 (RLH) serves as a coordination point for substrate. Arg-196 contributes to the FMN binding site.

It belongs to the pyridoxamine 5'-phosphate oxidase family. As to quaternary structure, homodimer. It depends on FMN as a cofactor.

The enzyme catalyses pyridoxamine 5'-phosphate + O2 + H2O = pyridoxal 5'-phosphate + H2O2 + NH4(+). The catalysed reaction is pyridoxine 5'-phosphate + O2 = pyridoxal 5'-phosphate + H2O2. It functions in the pathway cofactor metabolism; pyridoxal 5'-phosphate salvage; pyridoxal 5'-phosphate from pyridoxamine 5'-phosphate: step 1/1. The protein operates within cofactor metabolism; pyridoxal 5'-phosphate salvage; pyridoxal 5'-phosphate from pyridoxine 5'-phosphate: step 1/1. Its function is as follows. Catalyzes the oxidation of either pyridoxine 5'-phosphate (PNP) or pyridoxamine 5'-phosphate (PMP) into pyridoxal 5'-phosphate (PLP). In Flavobacterium johnsoniae (strain ATCC 17061 / DSM 2064 / JCM 8514 / BCRC 14874 / CCUG 350202 / NBRC 14942 / NCIMB 11054 / UW101) (Cytophaga johnsonae), this protein is Pyridoxine/pyridoxamine 5'-phosphate oxidase.